The following is a 158-amino-acid chain: Cyclic pyranopterin monophosphate synthase (158 aa).

Substrate contacts are provided by residues 76 to 78 (LCH) and 114 to 115 (ME). Asp129 is an active-site residue.

This sequence belongs to the MoaC family. Homohexamer; trimer of dimers.

The enzyme catalyses (8S)-3',8-cyclo-7,8-dihydroguanosine 5'-triphosphate = cyclic pyranopterin phosphate + diphosphate. It functions in the pathway cofactor biosynthesis; molybdopterin biosynthesis. Its function is as follows. Catalyzes the conversion of (8S)-3',8-cyclo-7,8-dihydroguanosine 5'-triphosphate to cyclic pyranopterin monophosphate (cPMP). This Shewanella baltica (strain OS223) protein is Cyclic pyranopterin monophosphate synthase.